Reading from the N-terminus, the 117-residue chain is Holo-[acyl-carrier-protein] synthase (117 aa).

Mg(2+) is bound by residues aspartate 8 and glutamate 55.

This sequence belongs to the P-Pant transferase superfamily. AcpS family. It depends on Mg(2+) as a cofactor.

Its subcellular location is the cytoplasm. The enzyme catalyses apo-[ACP] + CoA = holo-[ACP] + adenosine 3',5'-bisphosphate + H(+). Functionally, transfers the 4'-phosphopantetheine moiety from coenzyme A to a Ser of acyl-carrier-protein. The protein is Holo-[acyl-carrier-protein] synthase of Finegoldia magna (strain ATCC 29328 / DSM 20472 / WAL 2508) (Peptostreptococcus magnus).